The primary structure comprises 514 residues: WD repeat-containing protein 26 (514 aa).

In terms of domain architecture, CTLH spans 9–84; the sequence is EHPSATKFRN…EYLEDGKVLE (76 aa). WD repeat units lie at residues 206–245, 252–291, 297–337, 377–416, 419–461, and 464–504; these read EHCN…HLLK, GHAY…GELR, SHED…DSWE, QEDH…LVRK, GVTQ…PIAE, and GHTR…DHQN.

In terms of assembly, forms homooligomers. Identified in the CTLH complex that contains GID4, RANBP9 and/or RANBP10, MKLN1, MAEA, RMND5A (or alternatively its paralog RMND5B), GID8, ARMC8, WDR26 and YPEL5. Within this complex, MAEA, RMND5A (or alternatively its paralog RMND5B), GID8, WDR26, and RANBP9 and/or RANBP10 form the catalytic core, while GID4, MKLN1, ARMC8 and YPEL5 have ancillary roles. Interacts with DDB1-CUL4A/B E3 ligase complexes. Forms a complex composed of at least WDR26, a G-beta:gamma unit, and PLCB2. Interacts with AXIN1.

The protein resides in the cytoplasm. It is found in the nucleus. The protein localises to the mitochondrion. In terms of biological role, G-beta-like protein involved in cell signal transduction. Acts as a negative regulator in MAPK signaling pathway. Functions as a scaffolding protein to promote G beta:gamma-mediated PLCB2 plasma membrane translocation and subsequent activation in leukocytes. Core component of the CTLH E3 ubiquitin-protein ligase complex that selectively accepts ubiquitin from UBE2H and mediates ubiquitination and subsequent proteasomal degradation of the transcription factor HBP1. Acts as a negative regulator of the canonical Wnt signaling pathway through preventing ubiquitination of beta-catenin CTNNB1 by the beta-catenin destruction complex, thus negatively regulating CTNNB1 degradation. Protects cells from oxidative stress-induced apoptosis via the down-regulation of AP-1 transcriptional activity as well as by inhibiting cytochrome c release from mitochondria. Also protects cells by promoting hypoxia-mediated autophagy and mitophagy. The chain is WD repeat-containing protein 26 (Wdr26) from Rattus norvegicus (Rat).